A 142-amino-acid chain; its full sequence is Large ribosomal subunit protein uL16 (142 aa).

It belongs to the universal ribosomal protein uL16 family. In terms of assembly, part of the 50S ribosomal subunit.

In terms of biological role, binds 23S rRNA and is also seen to make contacts with the A and possibly P site tRNAs. The protein is Large ribosomal subunit protein uL16 of Phenylobacterium zucineum (strain HLK1).